A 483-amino-acid polypeptide reads, in one-letter code: General transcription factor IIH subunit 4 (483 aa).

The interval 93 to 117 (PQQQQSSQQSSSQQQQQQQQQQQQT) is disordered. Residues 94–116 (QQQQSSQQSSSQQQQQQQQQQQQ) show a composition bias toward low complexity.

It belongs to the TFB2 family. In terms of assembly, component of the 7-subunit TFIIH core complex composed of XPB/repB, XPD/repD, gtf2h1, gtf2h2, gtf2h3, gtf2h4 and gtf2h5, which is active in NER. The core complex associates with the 3-subunit CDK-activating kinase (CAK) module composed of cycH/cyclin H, cdk7 and mnat1 to form the 10-subunit holoenzyme (holo-TFIIH) active in transcription.

It is found in the nucleus. Component of the general transcription and DNA repair factor IIH (TFIIH) core complex, which is involved in general and transcription-coupled nucleotide excision repair (NER) of damaged DNA and, when complexed to CAK, in RNA transcription by RNA polymerase II. In NER, TFIIH acts by opening DNA around the lesion to allow the excision of the damaged oligonucleotide and its replacement by a new DNA fragment. In transcription, TFIIH has an essential role in transcription initiation. When the pre-initiation complex (PIC) has been established, TFIIH is required for promoter opening and promoter escape. Phosphorylation of the C-terminal tail (CTD) of the largest subunit of RNA polymerase II by the kinase module CAK controls the initiation of transcription. In Dictyostelium discoideum (Social amoeba), this protein is General transcription factor IIH subunit 4 (gtf2h4).